Reading from the N-terminus, the 1385-residue chain is DNA-directed RNA polymerase subunit beta'' (1385 aa).

C220, C293, C300, and C303 together coordinate Zn(2+).

This sequence belongs to the RNA polymerase beta' chain family. RpoC2 subfamily. In terms of assembly, in plastids the minimal PEP RNA polymerase catalytic core is composed of four subunits: alpha, beta, beta', and beta''. When a (nuclear-encoded) sigma factor is associated with the core the holoenzyme is formed, which can initiate transcription. Requires Zn(2+) as cofactor.

Its subcellular location is the plastid. The protein resides in the chloroplast. The enzyme catalyses RNA(n) + a ribonucleoside 5'-triphosphate = RNA(n+1) + diphosphate. In terms of biological role, DNA-dependent RNA polymerase catalyzes the transcription of DNA into RNA using the four ribonucleoside triphosphates as substrates. The chain is DNA-directed RNA polymerase subunit beta'' from Aethionema cordifolium (Lebanon stonecress).